A 450-amino-acid chain; its full sequence is Tubulin alpha chain (450 aa).

GTP is bound at residue Gln-11. Position 40 is an N6-acetyllysine (Lys-40). GTP contacts are provided by Glu-71, Ser-140, Gly-144, Thr-145, Thr-179, Asn-206, and Asn-228. Mg(2+) is bound at residue Glu-71. Glu-254 is an active-site residue.

This sequence belongs to the tubulin family. As to quaternary structure, dimer of alpha and beta chains. A typical microtubule is a hollow water-filled tube with an outer diameter of 25 nm and an inner diameter of 15 nM. Alpha-beta heterodimers associate head-to-tail to form protofilaments running lengthwise along the microtubule wall with the beta-tubulin subunit facing the microtubule plus end conferring a structural polarity. Microtubules usually have 13 protofilaments but different protofilament numbers can be found in some organisms and specialized cells. The cofactor is Mg(2+). Post-translationally, acetylation of alpha chains at Lys-40 stabilizes microtubules and affects affinity and processivity of microtubule motors. This modification has a role in multiple cellular functions, ranging from cell motility, cell cycle progression or cell differentiation to intracellular trafficking and signaling.

It is found in the cytoplasm. It localises to the cytoskeleton. The enzyme catalyses GTP + H2O = GDP + phosphate + H(+). In terms of biological role, tubulin is the major constituent of microtubules, a cylinder consisting of laterally associated linear protofilaments composed of alpha- and beta-tubulin heterodimers. Microtubules grow by the addition of GTP-tubulin dimers to the microtubule end, where a stabilizing cap forms. Below the cap, tubulin dimers are in GDP-bound state, owing to GTPase activity of alpha-tubulin. This Euplotes vannus (Marine ciliate) protein is Tubulin alpha chain.